A 646-amino-acid chain; its full sequence is Protein real-time (646 aa).

Residues 2-175 (VQKYESPVRI…FINELKKEGI (174 aa)) enclose the PRELI/MSF1 domain. The 178-residue stretch at 294-471 (TPVVVEKYFP…FLGGSCITMI (178 aa)) folds into the CRAL-TRIO domain. The GOLD domain occupies 499 to 646 (HHGLYKSVDL…GFSSNSLQSR (148 aa)).

The protein localises to the mitochondrion. In Aedes aegypti (Yellowfever mosquito), this protein is Protein real-time.